A 364-amino-acid chain; its full sequence is Methylthioribose-1-phosphate isomerase (364 aa).

Substrate-binding positions include 53–55 (RGA), R90, and Q200. D241 functions as the Proton donor in the catalytic mechanism. 251–252 (NK) provides a ligand contact to substrate.

Belongs to the eIF-2B alpha/beta/delta subunits family. MtnA subfamily.

It catalyses the reaction 5-(methylsulfanyl)-alpha-D-ribose 1-phosphate = 5-(methylsulfanyl)-D-ribulose 1-phosphate. The protein operates within amino-acid biosynthesis; L-methionine biosynthesis via salvage pathway; L-methionine from S-methyl-5-thio-alpha-D-ribose 1-phosphate: step 1/6. Catalyzes the interconversion of methylthioribose-1-phosphate (MTR-1-P) into methylthioribulose-1-phosphate (MTRu-1-P). In Methylobacterium nodulans (strain LMG 21967 / CNCM I-2342 / ORS 2060), this protein is Methylthioribose-1-phosphate isomerase.